The following is a 424-amino-acid chain: Cysteate synthase (424 aa).

N6-(pyridoxal phosphate)lysine is present on Lys-106. Asn-132 and Thr-381 together coordinate pyridoxal 5'-phosphate.

This sequence belongs to the threonine synthase family. Cysteate synthase subfamily. In terms of assembly, homotrimer. It depends on pyridoxal 5'-phosphate as a cofactor.

The catalysed reaction is O-phospho-L-serine + sulfite + H(+) = L-cysteate + phosphate. Its pathway is cofactor biosynthesis; coenzyme M biosynthesis. In terms of biological role, specifically catalyzes the beta-elimination of phosphate from L-phosphoserine and the beta-addition of sulfite to the dehydroalanine intermediate to produce L-cysteate. The polypeptide is Cysteate synthase (Methanoregula boonei (strain DSM 21154 / JCM 14090 / 6A8)).